Reading from the N-terminus, the 364-residue chain is Formimidoylglutamase (364 aa).

Mn(2+)-binding residues include H133, D189, H191, D193, D286, and D288.

The protein belongs to the arginase family. Mn(2+) is required as a cofactor.

It carries out the reaction N-formimidoyl-L-glutamate + H2O = formamide + L-glutamate. The protein operates within amino-acid degradation; L-histidine degradation into L-glutamate; L-glutamate from N-formimidoyl-L-glutamate (hydrolase route): step 1/1. Functionally, catalyzes the conversion of N-formimidoyl-L-glutamate to L-glutamate and formamide. The polypeptide is Formimidoylglutamase (Photobacterium profundum (strain SS9)).